Here is a 626-residue protein sequence, read N- to C-terminus: Chaperone protein HtpG (626 aa).

Residues 1 to 339 (MSQNQETRGF…SNDLPLNVSR (339 aa)) form an a; substrate-binding region. The segment at 340–555 (EILQDNKITA…NDQMTTQMAK (216 aa)) is b. The tract at residues 556–626 (LFAAAGQPVP…FIKRINKLLG (71 aa)) is c.

It belongs to the heat shock protein 90 family. Homodimer.

It is found in the cytoplasm. Molecular chaperone. Has ATPase activity. The polypeptide is Chaperone protein HtpG (Haemophilus influenzae (strain ATCC 51907 / DSM 11121 / KW20 / Rd)).